Consider the following 562-residue polypeptide: Arylsulfatase H (562 aa).

Residues Asp-15, Asp-16, and Cys-55 each coordinate Ca(2+). The active-site Nucleophile is Cys-55. Position 55 is a 3-oxoalanine (Cys) (Cys-55). Lys-115 contacts substrate. His-117 is a catalytic residue. 2 consecutive transmembrane segments (helical) span residues 167–187 and 189–209; these read LWIS…PKFA and WFSV…LFFT. His-271 is a binding site for substrate. Ca(2+) is bound by residues Asp-323 and Asn-324. Lys-348 serves as a coordination point for substrate.

It belongs to the sulfatase family. Ca(2+) is required as a cofactor. Post-translationally, the conversion to 3-oxoalanine (also known as C-formylglycine, FGly), of a serine or cysteine residue in prokaryotes and of a cysteine residue in eukaryotes, is critical for catalytic activity.

The protein localises to the membrane. This is Arylsulfatase H (ARSH) from Homo sapiens (Human).